A 194-amino-acid chain; its full sequence is Large ribosomal subunit protein bL25 (194 aa).

It belongs to the bacterial ribosomal protein bL25 family. CTC subfamily. Part of the 50S ribosomal subunit; part of the 5S rRNA/L5/L18/L25 subcomplex. Contacts the 5S rRNA. Binds to the 5S rRNA independently of L5 and L18.

Functionally, this is one of the proteins that binds to the 5S RNA in the ribosome where it forms part of the central protuberance. The protein is Large ribosomal subunit protein bL25 of Thermobifida fusca (strain YX).